The primary structure comprises 202 residues: Large ribosomal subunit protein bL25 (202 aa).

This sequence belongs to the bacterial ribosomal protein bL25 family. CTC subfamily. Part of the 50S ribosomal subunit; part of the 5S rRNA/L5/L18/L25 subcomplex. Contacts the 5S rRNA. Binds to the 5S rRNA independently of L5 and L18.

Its function is as follows. This is one of the proteins that binds to the 5S RNA in the ribosome where it forms part of the central protuberance. This Corynebacterium efficiens (strain DSM 44549 / YS-314 / AJ 12310 / JCM 11189 / NBRC 100395) protein is Large ribosomal subunit protein bL25.